We begin with the raw amino-acid sequence, 500 residues long: L-arabinose isomerase (500 aa).

Mn(2+) is bound by residues Glu-306, Glu-333, His-349, and His-448.

It belongs to the arabinose isomerase family. Mn(2+) serves as cofactor.

It carries out the reaction beta-L-arabinopyranose = L-ribulose. The protein operates within carbohydrate degradation; L-arabinose degradation via L-ribulose; D-xylulose 5-phosphate from L-arabinose (bacterial route): step 1/3. In terms of biological role, catalyzes the conversion of L-arabinose to L-ribulose. This Shewanella sp. (strain MR-4) protein is L-arabinose isomerase.